Consider the following 521-residue polypeptide: MIKQALISVSDKTGIVDFAKSLSDLGVKLLSTGGTAKLLADAGLPVTEVADYTGFPEMLDGRVKTLHPKVHGGILARRDLPEHMQALEQHDIPTIDLLVVNLYPFVATIAKDDCTLADAIENIDIGGPTMLRSAAKNHRDVTVVVDPADYAVVLDEMKANGNAIGYATNFRLATKVFAHTAQYDGAITNYLTSLTDELQHASRSTYPATLNLAFDKVQDLRYGENPHQSAAFYRDLAAPAGALANYRQLQGKELSYNNIADSDAAWECVKTFDAPACVIIKHANPCGVAVGNDPADAYAKAFQTDPTSAFGGIIAFNREVDEAAAQAVAKQFVEVLIAPSFSAAAQQVFAAKQNVRLLEIALGDGHNAFDLKRVGGGLLVQSLDSRNVQPSELRVVTKRQPSAKEMDDLLFAWRVAKYVKSNAIVFCGNGMTLGVGAGQMSRVDSARIASIKAQNAGLTLAGSAVASDAFFPFRDGLDVVVAAGATCVIQPGGSMRDDEVIAAADEHGIAMVLTGVRHFRH.

One can recognise an MGS-like domain in the interval 1–145 (MIKQALISVS…KNHRDVTVVV (145 aa)).

It belongs to the PurH family.

It carries out the reaction (6R)-10-formyltetrahydrofolate + 5-amino-1-(5-phospho-beta-D-ribosyl)imidazole-4-carboxamide = 5-formamido-1-(5-phospho-D-ribosyl)imidazole-4-carboxamide + (6S)-5,6,7,8-tetrahydrofolate. The enzyme catalyses IMP + H2O = 5-formamido-1-(5-phospho-D-ribosyl)imidazole-4-carboxamide. Its pathway is purine metabolism; IMP biosynthesis via de novo pathway; 5-formamido-1-(5-phospho-D-ribosyl)imidazole-4-carboxamide from 5-amino-1-(5-phospho-D-ribosyl)imidazole-4-carboxamide (10-formyl THF route): step 1/1. The protein operates within purine metabolism; IMP biosynthesis via de novo pathway; IMP from 5-formamido-1-(5-phospho-D-ribosyl)imidazole-4-carboxamide: step 1/1. This is Bifunctional purine biosynthesis protein PurH from Burkholderia vietnamiensis (strain G4 / LMG 22486) (Burkholderia cepacia (strain R1808)).